The primary structure comprises 537 residues: CTP synthase (537 aa).

Residues M1 to L268 are amidoligase domain. S15 is a binding site for CTP. UTP is bound at residue S15. S16–I21 contributes to the ATP binding site. Y56 is an L-glutamine binding site. D73 contacts ATP. The Mg(2+) site is built by D73 and E143. CTP contacts are provided by residues D150 to E152, K189 to Q194, and K225. Residues K189–Q194 and K225 contribute to the UTP site. Positions N296–N537 constitute a Glutamine amidotransferase type-1 domain. Residue G357 participates in L-glutamine binding. The active-site Nucleophile; for glutamine hydrolysis is C384. L-glutamine contacts are provided by residues L385–Q388, E408, and R465. Catalysis depends on residues H510 and E512.

Belongs to the CTP synthase family. In terms of assembly, homotetramer.

The enzyme catalyses UTP + L-glutamine + ATP + H2O = CTP + L-glutamate + ADP + phosphate + 2 H(+). The catalysed reaction is L-glutamine + H2O = L-glutamate + NH4(+). It carries out the reaction UTP + NH4(+) + ATP = CTP + ADP + phosphate + 2 H(+). It functions in the pathway pyrimidine metabolism; CTP biosynthesis via de novo pathway; CTP from UDP: step 2/2. Its activity is regulated as follows. Allosterically activated by GTP, when glutamine is the substrate; GTP has no effect on the reaction when ammonia is the substrate. The allosteric effector GTP functions by stabilizing the protein conformation that binds the tetrahedral intermediate(s) formed during glutamine hydrolysis. Inhibited by the product CTP, via allosteric rather than competitive inhibition. Its function is as follows. Catalyzes the ATP-dependent amination of UTP to CTP with either L-glutamine or ammonia as the source of nitrogen. Regulates intracellular CTP levels through interactions with the four ribonucleotide triphosphates. The polypeptide is CTP synthase (Bacteroides thetaiotaomicron (strain ATCC 29148 / DSM 2079 / JCM 5827 / CCUG 10774 / NCTC 10582 / VPI-5482 / E50)).